Reading from the N-terminus, the 251-residue chain is Imidazole glycerol phosphate synthase subunit HisF (251 aa).

Catalysis depends on residues Asp-11 and Asp-130.

It belongs to the HisA/HisF family. In terms of assembly, heterodimer of HisH and HisF.

It is found in the cytoplasm. The enzyme catalyses 5-[(5-phospho-1-deoxy-D-ribulos-1-ylimino)methylamino]-1-(5-phospho-beta-D-ribosyl)imidazole-4-carboxamide + L-glutamine = D-erythro-1-(imidazol-4-yl)glycerol 3-phosphate + 5-amino-1-(5-phospho-beta-D-ribosyl)imidazole-4-carboxamide + L-glutamate + H(+). It functions in the pathway amino-acid biosynthesis; L-histidine biosynthesis; L-histidine from 5-phospho-alpha-D-ribose 1-diphosphate: step 5/9. In terms of biological role, IGPS catalyzes the conversion of PRFAR and glutamine to IGP, AICAR and glutamate. The HisF subunit catalyzes the cyclization activity that produces IGP and AICAR from PRFAR using the ammonia provided by the HisH subunit. The chain is Imidazole glycerol phosphate synthase subunit HisF from Chlorobium chlorochromatii (strain CaD3).